Consider the following 569-residue polypeptide: 2-succinyl-5-enolpyruvyl-6-hydroxy-3-cyclohexene-1-carboxylate synthase (569 aa).

The protein belongs to the TPP enzyme family. MenD subfamily. As to quaternary structure, homodimer. The cofactor is Mg(2+). It depends on Mn(2+) as a cofactor. Thiamine diphosphate is required as a cofactor.

The catalysed reaction is isochorismate + 2-oxoglutarate + H(+) = 5-enolpyruvoyl-6-hydroxy-2-succinyl-cyclohex-3-ene-1-carboxylate + CO2. It functions in the pathway quinol/quinone metabolism; 1,4-dihydroxy-2-naphthoate biosynthesis; 1,4-dihydroxy-2-naphthoate from chorismate: step 2/7. The protein operates within quinol/quinone metabolism; menaquinone biosynthesis. In terms of biological role, catalyzes the thiamine diphosphate-dependent decarboxylation of 2-oxoglutarate and the subsequent addition of the resulting succinic semialdehyde-thiamine pyrophosphate anion to isochorismate to yield 2-succinyl-5-enolpyruvyl-6-hydroxy-3-cyclohexene-1-carboxylate (SEPHCHC). This Shewanella halifaxensis (strain HAW-EB4) protein is 2-succinyl-5-enolpyruvyl-6-hydroxy-3-cyclohexene-1-carboxylate synthase.